A 236-amino-acid chain; its full sequence is 2-C-methyl-D-erythritol 4-phosphate cytidylyltransferase (236 aa).

Belongs to the IspD/TarI cytidylyltransferase family. IspD subfamily. Homodimer.

It catalyses the reaction 2-C-methyl-D-erythritol 4-phosphate + CTP + H(+) = 4-CDP-2-C-methyl-D-erythritol + diphosphate. It participates in isoprenoid biosynthesis; isopentenyl diphosphate biosynthesis via DXP pathway; isopentenyl diphosphate from 1-deoxy-D-xylulose 5-phosphate: step 2/6. In terms of biological role, catalyzes the formation of 4-diphosphocytidyl-2-C-methyl-D-erythritol from CTP and 2-C-methyl-D-erythritol 4-phosphate (MEP). The protein is 2-C-methyl-D-erythritol 4-phosphate cytidylyltransferase of Salmonella agona (strain SL483).